Reading from the N-terminus, the 282-residue chain is Putative dolichyldiphosphatase (282 aa).

Helical transmembrane passes span 26–46 and 93–113; these read LLCA…ATLI and MPSS…LFLL. A disordered region spans residues 121 to 153; it reads QQQQQQQKQKQRERKKQVTNVKTTTTNGSGNGS. Low complexity predominate over residues 138–148; that stretch reads VTNVKTTTTNG. The next 2 membrane-spanning stretches (helical) occupy residues 173 to 193 and 207 to 227; these read WSFA…GAVA and VLVG…VTHV.

Belongs to the dolichyldiphosphatase family.

Its subcellular location is the endoplasmic reticulum membrane. The enzyme catalyses a di-trans,poly-cis-dolichyl diphosphate + H2O = a di-trans,poly-cis-dolichyl phosphate + phosphate + H(+). It participates in protein modification; protein glycosylation. This chain is Putative dolichyldiphosphatase, found in Neurospora crassa (strain ATCC 24698 / 74-OR23-1A / CBS 708.71 / DSM 1257 / FGSC 987).